A 117-amino-acid polypeptide reads, in one-letter code: Large ribosomal subunit protein uL18 (117 aa).

The protein belongs to the universal ribosomal protein uL18 family. In terms of assembly, part of the 50S ribosomal subunit; part of the 5S rRNA/L5/L18/L25 subcomplex. Contacts the 5S and 23S rRNAs.

In terms of biological role, this is one of the proteins that bind and probably mediate the attachment of the 5S RNA into the large ribosomal subunit, where it forms part of the central protuberance. In Klebsiella pneumoniae subsp. pneumoniae (strain ATCC 700721 / MGH 78578), this protein is Large ribosomal subunit protein uL18.